We begin with the raw amino-acid sequence, 425 residues long: Voltage-dependent calcium channel gamma-8 subunit (425 aa).

A run of 4 helical transmembrane segments spans residues 19–39, 129–149, 158–178, and 208–228; these read VQVL…TIAI, SIFP…VAAS, IILG…IGVI, and FGGL…NIYI. Serine 252 and serine 255 each carry phosphoserine. The segment at 272-304 is disordered; sequence RRSRSSSRSSEPSPSRDASPGGPGGPGFASTDI. Residues 277 to 287 are compositionally biased toward low complexity; that stretch reads SSRSSEPSPSR. Residues 318–338 traverse the membrane as a helical segment; sequence VAAGLAGAGGGGGGAVGAFGG. The segment covering 343–354 has biased composition (gly residues); that stretch reads AGGGGGGGGGAG. 2 disordered regions span residues 343 to 365 and 377 to 425; these read AGGG…ASGF and GGGV…TTPV. Over residues 387-401 the composition is skewed to pro residues; sequence PPAPPAPAPPAPSAP. The span at 412-425 shows a compositional bias: polar residues; it reads ASNTNTLNRKTTPV.

The protein belongs to the PMP-22/EMP/MP20 family. CACNG subfamily. As to quaternary structure, interacts with CACNA1C. Identified in a complex with the L-type calcium channel subunits CACNA1C, CACNA2D1 and either CACNB1 or CACNB2. Acts as an auxiliary subunit for AMPA-selective glutamate receptors (AMPARs). Found in a complex with GRIA1, GRIA2, GRIA3, GRIA4, CNIH2, CNIH3, CACNG2, CACNG3, CACNG4, CACNG5 and CACNG7. Interacts with CNIH2. Found in a complex with GRIA1, GRIA2, GRIA3, GRIA4, DLG4 and CNIH2. Post-translationally, palmitoylated. Probably palmitoylated by ZDHHC3 and ZDHHC7. Detected in heart left ventricle.

It is found in the cell membrane. The protein resides in the postsynaptic density membrane. Functionally, regulates the activity of L-type calcium channels that contain CACNA1C as pore-forming subunit. Regulates the trafficking and gating properties of AMPA-selective glutamate receptors (AMPARs). Promotes their targeting to the cell membrane and synapses and modulates their gating properties by slowing their rates of activation, deactivation and desensitization and by mediating their resensitization. Does not show subunit-specific AMPA receptor regulation and regulates all AMPAR subunits. The protein is Voltage-dependent calcium channel gamma-8 subunit of Homo sapiens (Human).